Reading from the N-terminus, the 47-residue chain is Cytochrome b559 subunit beta (47 aa).

The chain crosses the membrane as a helical span at residues 22–38 (WLAVHTLAIPTVFFLGA). Residue His-26 coordinates heme.

It belongs to the PsbE/PsbF family. In terms of assembly, heterodimer of an alpha subunit and a beta subunit. PSII is composed of 1 copy each of membrane proteins PsbA, PsbB, PsbC, PsbD, PsbE, PsbF, PsbH, PsbI, PsbJ, PsbK, PsbL, PsbM, PsbT, PsbX, PsbY, PsbZ, Psb30/Ycf12, peripheral proteins PsbO, CyanoQ (PsbQ), PsbU, PsbV and a large number of cofactors. It forms dimeric complexes. Heme b is required as a cofactor.

It localises to the cellular thylakoid membrane. This b-type cytochrome is tightly associated with the reaction center of photosystem II (PSII). PSII is a light-driven water:plastoquinone oxidoreductase that uses light energy to abstract electrons from H(2)O, generating O(2) and a proton gradient subsequently used for ATP formation. It consists of a core antenna complex that captures photons, and an electron transfer chain that converts photonic excitation into a charge separation. This is Cytochrome b559 subunit beta from Synechococcus sp. (strain JA-3-3Ab) (Cyanobacteria bacterium Yellowstone A-Prime).